Reading from the N-terminus, the 461-residue chain is Coronin-1A (461 aa).

N-acetylserine is present on Ser-2. At Ser-2 the chain carries Phosphoserine; by PKC. WD repeat units follow at residues 13 to 63 (HVFG…LVLP), 73 to 110 (NVPLVCGHTAPVLDIAWCPHNDNVIASGSEDCTVMVWE), 123 to 160 (PVITLEGHTKRVGIVAWHPTAQNVLLSAGCDNVILVWD), 164 to 204 (GAAV…RVIE), 207 to 251 (KGTV…ALWD), 258 to 296 (PLSLQELDTSSGVLLPFFDPDTNIVYLCGKGDSSIRYFE), and 302 to 349 (PFLH…EPIA). Over residues 403–418 (ELRVNRGLDSARRRAT) the composition is skewed to basic and acidic residues. A disordered region spans residues 403–434 (ELRVNRGLDSARRRATPEPSGTPSSDTVSRLE). Ser-412 bears the Phosphoserine; by PKC mark. The residue at position 418 (Thr-418) is a Phosphothreonine. Polar residues predominate over residues 421–430 (PSGTPSSDTV). Ser-422 carries the post-translational modification Phosphoserine. Residues 424-461 (TPSSDTVSRLEEDVRNLNAIVQKLQERLDRLEETVQAK) are a coiled coil.

The protein belongs to the WD repeat coronin family. Binds actin. Phosphorylation at Ser-412 by PKC strongly down-regulates the association with actin. Post-translationally, polyubiquitinated by RNF128 with 'Lys-48'-linked chains, leading to proteasomal degradation. Expressed in spleen, lymph nodes, thymus, brain and at very lower levels in lung. Also expressed in cells of the lymphoid/myeloid lineage. Not expressed in Kuffper cells.

It is found in the cytoplasm. The protein resides in the cytoskeleton. The protein localises to the cell cortex. It localises to the cytoplasmic vesicle. Its subcellular location is the phagosome membrane. In terms of biological role, may be a crucial component of the cytoskeleton of highly motile cells, functioning both in the invagination of large pieces of plasma membrane, as well as in forming protrusions of the plasma membrane involved in cell locomotion. In mycobacteria-infected cells, its retention on the phagosomal membrane prevents fusion between phagosomes and lysosomes. The chain is Coronin-1A (Coro1a) from Mus musculus (Mouse).